The sequence spans 134 residues: S-protein homolog 18 (134 aa).

Positions 1–25 (MCPSSFRLILSVILIAFLFVGLCEA) are cleaved as a signal peptide. Residue N87 is glycosylated (N-linked (GlcNAc...) asparagine).

The protein belongs to the plant self-incompatibility (S1) protein family.

The protein localises to the secreted. In Arabidopsis thaliana (Mouse-ear cress), this protein is S-protein homolog 18.